The following is a 213-amino-acid chain: Tellurium resistance protein TerX (213 aa).

The protein belongs to the CAPAB/TerDEXZ family.

In terms of biological role, not known; seems to contribute to the tellurium resistance (Ter) mechanism. Also involved in phage inhibition (Phi) and colicin resistance (PacB). The chain is Tellurium resistance protein TerX (terX) from Serratia marcescens.